Reading from the N-terminus, the 343-residue chain is GTPase Obg (343 aa).

In terms of domain architecture, Obg spans 1–158 (MFIDEAKIRV…FTLRLELKVL (158 aa)). Residues 121 to 140 (RGGRGNQHFATSTHQAPREH) are disordered. One can recognise an OBG-type G domain in the interval 159–333 (ADIGIVGYPN…LKYAMAERVR (175 aa)). Residues 165–172 (GYPNVGKS), 190–194 (FTTLE), 215–218 (DIPG), 286–289 (SKID), and 314–316 (SAV) each bind GTP. The Mg(2+) site is built by S172 and T192.

This sequence belongs to the TRAFAC class OBG-HflX-like GTPase superfamily. OBG GTPase family. As to quaternary structure, monomer. The cofactor is Mg(2+).

The protein localises to the cytoplasm. In terms of biological role, an essential GTPase which binds GTP, GDP and possibly (p)ppGpp with moderate affinity, with high nucleotide exchange rates and a fairly low GTP hydrolysis rate. Plays a role in control of the cell cycle, stress response, ribosome biogenesis and in those bacteria that undergo differentiation, in morphogenesis control. This Acidobacterium capsulatum (strain ATCC 51196 / DSM 11244 / BCRC 80197 / JCM 7670 / NBRC 15755 / NCIMB 13165 / 161) protein is GTPase Obg.